The following is a 641-amino-acid chain: Threonine--tRNA ligase (641 aa).

One can recognise a TGS domain in the interval M1–T61. Residues D242–P533 are catalytic. C333, H384, and H510 together coordinate Zn(2+).

The protein belongs to the class-II aminoacyl-tRNA synthetase family. Homodimer. Requires Zn(2+) as cofactor.

The protein localises to the cytoplasm. The catalysed reaction is tRNA(Thr) + L-threonine + ATP = L-threonyl-tRNA(Thr) + AMP + diphosphate + H(+). Its function is as follows. Catalyzes the attachment of threonine to tRNA(Thr) in a two-step reaction: L-threonine is first activated by ATP to form Thr-AMP and then transferred to the acceptor end of tRNA(Thr). Also edits incorrectly charged L-seryl-tRNA(Thr). This is Threonine--tRNA ligase from Prochlorococcus marinus (strain NATL2A).